Consider the following 488-residue polypeptide: Catalase (488 aa).

Residues 1 to 26 form a disordered region; it reads MTDRKNLTTNQGVPVGDNQNSMTAGR. Over residues 7–23 the composition is skewed to polar residues; that stretch reads LTTNQGVPVGDNQNSMT. Active-site residues include H55 and N128. Residue Y338 coordinates heme.

The protein belongs to the catalase family. It depends on heme as a cofactor.

The protein localises to the cytoplasm. It carries out the reaction 2 H2O2 = O2 + 2 H2O. In terms of biological role, decomposes hydrogen peroxide into water and oxygen; serves to protect cells from the toxic effects of hydrogen peroxide. The polypeptide is Catalase (kat) (Listeria monocytogenes serovar 1/2a (strain ATCC BAA-679 / EGD-e)).